The following is a 321-amino-acid chain: Glycerol-3-phosphate dehydrogenase [NAD(P)+] (321 aa).

NADPH-binding residues include Ser10, Trp11, Arg31, Arg32, Tyr47, and Lys98. Sn-glycerol 3-phosphate contacts are provided by Lys98, Gly125, and Ser127. NADPH is bound at residue Ala129. Sn-glycerol 3-phosphate is bound by residues Lys177, Asp230, Ser240, Arg241, and Asn242. Residue Lys177 is the Proton acceptor of the active site. Residue Arg241 participates in NADPH binding. Val265 and Glu267 together coordinate NADPH.

It belongs to the NAD-dependent glycerol-3-phosphate dehydrogenase family.

The protein resides in the cytoplasm. It carries out the reaction sn-glycerol 3-phosphate + NAD(+) = dihydroxyacetone phosphate + NADH + H(+). The enzyme catalyses sn-glycerol 3-phosphate + NADP(+) = dihydroxyacetone phosphate + NADPH + H(+). It functions in the pathway membrane lipid metabolism; glycerophospholipid metabolism. Catalyzes the reduction of the glycolytic intermediate dihydroxyacetone phosphate (DHAP) to sn-glycerol 3-phosphate (G3P), the key precursor for phospholipid synthesis. This is Glycerol-3-phosphate dehydrogenase [NAD(P)+] from Thermotoga sp. (strain RQ2).